We begin with the raw amino-acid sequence, 72 residues long: Putative membrane protein insertion efficiency factor (72 aa).

This sequence belongs to the UPF0161 family.

Its subcellular location is the cell inner membrane. Its function is as follows. Could be involved in insertion of integral membrane proteins into the membrane. The polypeptide is Putative membrane protein insertion efficiency factor (Amoebophilus asiaticus (strain 5a2)).